A 283-amino-acid chain; its full sequence is Dihydropteroate synthase type-1 (283 aa).

Positions Val-6 to Thr-262 constitute a Pterin-binding domain. Residue Asn-13 coordinates Mg(2+). (7,8-dihydropterin-6-yl)methyl diphosphate is bound by residues Asp-86, Asn-105, Asp-177, Lys-216, and Arg-250–His-252.

Belongs to the DHPS family. Homodimer or homotrimer. Mg(2+) is required as a cofactor.

The catalysed reaction is (7,8-dihydropterin-6-yl)methyl diphosphate + 4-aminobenzoate = 7,8-dihydropteroate + diphosphate. Its pathway is cofactor biosynthesis; tetrahydrofolate biosynthesis; 7,8-dihydrofolate from 2-amino-4-hydroxy-6-hydroxymethyl-7,8-dihydropteridine diphosphate and 4-aminobenzoate: step 1/2. Catalyzes the condensation of para-aminobenzoate (pABA) with 6-hydroxymethyl-7,8-dihydropterin diphosphate (DHPt-PP) to form 7,8-dihydropteroate (H2Pte), the immediate precursor of folate derivatives. Implicated in resistance to sulfonamide. The chain is Dihydropteroate synthase type-1 (sulI) from Mycolicibacterium fortuitum (Mycobacterium fortuitum).